We begin with the raw amino-acid sequence, 278 residues long: 4-deoxy-L-threo-5-hexosulose-uronate ketol-isomerase (278 aa).

4 residues coordinate Zn(2+): histidine 196, histidine 198, glutamate 203, and histidine 245.

It belongs to the KduI family. Zn(2+) is required as a cofactor.

It carries out the reaction 5-dehydro-4-deoxy-D-glucuronate = 3-deoxy-D-glycero-2,5-hexodiulosonate. It participates in glycan metabolism; pectin degradation; 2-dehydro-3-deoxy-D-gluconate from pectin: step 4/5. Functionally, catalyzes the isomerization of 5-dehydro-4-deoxy-D-glucuronate to 3-deoxy-D-glycero-2,5-hexodiulosonate. The polypeptide is 4-deoxy-L-threo-5-hexosulose-uronate ketol-isomerase (Salmonella agona (strain SL483)).